Reading from the N-terminus, the 734-residue chain is Photosystem I P700 chlorophyll a apoprotein A2 (734 aa).

8 consecutive transmembrane segments (helical) span residues 46–69 (IFAS…FHVA), 135–158 (LYTG…LHLQ), 175–199 (LNHH…HVAI), 273–291 (MAHH…GHMY), 330–353 (IHFQ…QHMY), 369–395 (AALY…IFFI), 417–439 (AIIS…LYVH), and 517–535 (FLVH…LILV). Positions 559 and 568 each coordinate [4Fe-4S] cluster. 2 helical membrane passes run 575–596 (AFYL…YWHW) and 643–665 (LSVW…MFLI). Positions 654, 662, and 670 each coordinate chlorophyll a. Tryptophan 671 lines the phylloquinone pocket. Residues 707-727 (LVGLAHFSVGYIFTYAAFLIA) traverse the membrane as a helical segment.

It belongs to the PsaA/PsaB family. In terms of assembly, the PsaA/B heterodimer binds the P700 chlorophyll special pair and subsequent electron acceptors. PSI consists of a core antenna complex that captures photons, and an electron transfer chain that converts photonic excitation into a charge separation. The eukaryotic PSI reaction center is composed of at least 11 subunits. Requires P700 is a chlorophyll a/chlorophyll a' dimer, A0 is one or more chlorophyll a, A1 is one or both phylloquinones and FX is a shared 4Fe-4S iron-sulfur center. as cofactor.

The protein localises to the plastid. It localises to the chloroplast thylakoid membrane. It carries out the reaction reduced [plastocyanin] + hnu + oxidized [2Fe-2S]-[ferredoxin] = oxidized [plastocyanin] + reduced [2Fe-2S]-[ferredoxin]. Functionally, psaA and PsaB bind P700, the primary electron donor of photosystem I (PSI), as well as the electron acceptors A0, A1 and FX. PSI is a plastocyanin-ferredoxin oxidoreductase, converting photonic excitation into a charge separation, which transfers an electron from the donor P700 chlorophyll pair to the spectroscopically characterized acceptors A0, A1, FX, FA and FB in turn. Oxidized P700 is reduced on the lumenal side of the thylakoid membrane by plastocyanin. In Crucihimalaya wallichii (Rock-cress), this protein is Photosystem I P700 chlorophyll a apoprotein A2.